The sequence spans 395 residues: Tyrosine--tRNA ligase (395 aa).

The 'HIGH' region motif lies at 42-51 (PTAPDIHLGH). Positions 226–230 (KMSKS) match the 'KMSKS' region motif. An ATP-binding site is contributed by Lys-229. One can recognise an S4 RNA-binding domain in the interval 334-394 (IGLATLLKEA…GKRKFARVTV (61 aa)).

Belongs to the class-I aminoacyl-tRNA synthetase family. TyrS type 2 subfamily. Homodimer.

The protein localises to the cytoplasm. It carries out the reaction tRNA(Tyr) + L-tyrosine + ATP = L-tyrosyl-tRNA(Tyr) + AMP + diphosphate + H(+). Catalyzes the attachment of tyrosine to tRNA(Tyr) in a two-step reaction: tyrosine is first activated by ATP to form Tyr-AMP and then transferred to the acceptor end of tRNA(Tyr). The sequence is that of Tyrosine--tRNA ligase from Haemophilus influenzae (strain 86-028NP).